A 445-amino-acid chain; its full sequence is Damage suppressor protein (445 aa).

2 stretches are compositionally biased toward polar residues: residues 1–15 (MASTHQSSTEPSSTG) and 25–47 (SQGSGQDSKNVTVTKGTGSSATS). Disordered stretches follow at residues 1–145 (MAST…HSVI) and 203–445 (YHSV…RKRK). Positions 61–73 (SSTTAGSSSTQGQ) are enriched in low complexity. Polar residues predominate over residues 74-87 (KFSTTPTDPKTFSS). The span at 88-97 (DQKEKSKSPA) shows a compositional bias: basic and acidic residues. Low complexity predominate over residues 117–138 (DAKSSGQSQGQSKDSGKSSSDS). The segment covering 207 to 228 (VGDKTDDKKEGEHSGDKKDDSK) has biased composition (basic and acidic residues). Residues 208 to 445 (GDKTDDKKEG…GGKAGGRKRK (238 aa)) are required and sufficient for DNA-binding and co-localization with nuclear DNA. Positions 245-256 (ETSGQAESSSGN) are enriched in polar residues. The span at 257-306 (EGAAPAKGRGRGRPPAAAKGVAKGAAKGAAASKGAKSGAESSKGGEQSSG) shows a compositional bias: low complexity. A compositionally biased stretch (gly residues) spans 329 to 338 (GEGGASGSEG). The segment at 360 to 445 (EPPRRSSRLT…GGKAGGRKRK (86 aa)) is required for nucleosome binding and for the protection of chromatin from hydroxyl radical-mediated DNA damage. Over residues 367–431 (RLTSSGTGAG…ASKAPQNGAG (65 aa)) the composition is skewed to low complexity. Over residues 432–445 (AKKKGGKAGGRKRK) the composition is skewed to basic residues.

It localises to the nucleus. Its function is as follows. Unique chromatin-associating protein that contributes to the organism's exceptional tolerance to harsh environmental stresses. Binds with a higher affinity to nucleosomes than to free DNA. Protects chromatin from damage caused by hydroxyl radical-mediated cleavage induced by X-rays or treatment with hydrogen peroxide. Suppresses X-ray-induced DNA damage that includes single-strand breaks (SSBs) as well as more hazardous double-strand breaks (DSBs), and improves radiotolerance. Also shields DNA against reactive oxygen species (ROS). This Ramazzottius varieornatus (Water bear) protein is Damage suppressor protein.